Reading from the N-terminus, the 285-residue chain is Urease accessory protein UreD (285 aa).

Belongs to the UreD family. In terms of assembly, ureD, UreF and UreG form a complex that acts as a GTP-hydrolysis-dependent molecular chaperone, activating the urease apoprotein by helping to assemble the nickel containing metallocenter of UreC. The UreE protein probably delivers the nickel.

It is found in the cytoplasm. Required for maturation of urease via the functional incorporation of the urease nickel metallocenter. The chain is Urease accessory protein UreD from Methylobacillus flagellatus (strain ATCC 51484 / DSM 6875 / VKM B-1610 / KT).